The sequence spans 416 residues: Phosphoglycerate kinase (416 aa).

Positions 23, 24, 25, 26, 38, 39, 62, 63, 65, 66, 121, 122, 168, and 169 each coordinate (2R)-3-phosphoglycerate. Residue Gly212 participates in ADP binding. Gly212 contacts CDP. Residues Ala213 and Lys214 each contribute to the AMP site. Residue Ala213 participates in ATP binding. A Mg(2+)-binding site is contributed by Ala213. 2 residues coordinate Mg(2+): Ala216 and Asp217. Asp217 is a binding site for CDP. Lys218 serves as a coordination point for AMP. Lys218 lines the ATP pocket. Gly236 lines the ADP pocket. A CDP-binding site is contributed by Gly236. AMP is bound by residues Gly237 and Gly311. Residues Gly237 and Gly311 each coordinate ATP. Residues Gly336 and Phe341 each coordinate CDP. An ADP-binding site is contributed by Phe341. Glu342 serves as a coordination point for AMP. Residues Glu342, Asp373, and Thr374 each contribute to the ATP site. Residue Asp373 coordinates Mg(2+).

Belongs to the phosphoglycerate kinase family. Monomer. Mg(2+) serves as cofactor.

It is found in the cytoplasm. The protein resides in the mitochondrion. The enzyme catalyses (2R)-3-phosphoglycerate + ATP = (2R)-3-phospho-glyceroyl phosphate + ADP. Its pathway is carbohydrate degradation; glycolysis; pyruvate from D-glyceraldehyde 3-phosphate: step 2/5. Functionally, catalyzes one of the two ATP producing reactions in the glycolytic pathway via the reversible conversion of 1,3-diphosphoglycerate to 3-phosphoglycerate. Both L- and D- forms of purine and pyrimidine nucleotides can be used as substrates, but the activity is much lower on pyrimidines. Negatively regulates the biosynthesis of acetyl-CoA from pyruvate in the mitochondrion. This Kluyveromyces lactis (strain ATCC 8585 / CBS 2359 / DSM 70799 / NBRC 1267 / NRRL Y-1140 / WM37) (Yeast) protein is Phosphoglycerate kinase (PGK).